The primary structure comprises 225 residues: Thymidylate kinase (225 aa).

Residue 9–16 participates in ATP binding; it reads GIEGCGKT.

It belongs to the thymidylate kinase family.

The enzyme catalyses dTMP + ATP = dTDP + ADP. Phosphorylation of dTMP to form dTDP in both de novo and salvage pathways of dTTP synthesis. The polypeptide is Thymidylate kinase (Citrifermentans bemidjiense (strain ATCC BAA-1014 / DSM 16622 / JCM 12645 / Bem) (Geobacter bemidjiensis)).